Reading from the N-terminus, the 363-residue chain is Mitogen-activated protein kinase 12 (363 aa).

The region spanning 25 to 309 (YKDLKQVGTG…AAEALAFPFF (285 aa)) is the Protein kinase domain. Residues 31 to 39 (VGTGAYGTV) and Lys54 each bind ATP. The active-site Proton acceptor is Asp151. Thr181 carries the phosphothreonine modification. Positions 181–183 (TGY) match the TXY motif. Tyr183 carries the phosphotyrosine modification.

Belongs to the protein kinase superfamily. CMGC Ser/Thr protein kinase family. MAP kinase subfamily. Mg(2+) serves as cofactor. Post-translationally, dually phosphorylated on Thr-181 and Tyr-183, which activates the enzyme.

The protein resides in the cytoplasm. The enzyme catalyses L-seryl-[protein] + ATP = O-phospho-L-seryl-[protein] + ADP + H(+). It carries out the reaction L-threonyl-[protein] + ATP = O-phospho-L-threonyl-[protein] + ADP + H(+). With respect to regulation, activated by threonine and tyrosine phosphorylation. Serine/threonine kinase which acts as an essential component of the MAP kinase signal transduction pathway. MAPK12 is one of the four p38 MAPKs which play an important role in the cascades of cellular responses evoked by extracellular stimuli such as pro-inflammatory cytokines or physical stress leading to direct activation of transcription factors. Accordingly, p38 MAPKs phosphorylate a broad range of proteins and it has been estimated that they may have approximately 200 to 300 substrates each. Some of the targets are downstream kinases such as MAPKAPK2, which are activated through phosphorylation and further phosphorylate additional targets. In Danio rerio (Zebrafish), this protein is Mitogen-activated protein kinase 12 (mapk12).